Reading from the N-terminus, the 208-residue chain is Pyrrolidone-carboxylate peptidase (208 aa).

Residues glutamate 79, cysteine 142, and histidine 166 contribute to the active site.

The protein belongs to the peptidase C15 family. Homotetramer made of two disulfide-linked dimers.

The protein localises to the cytoplasm. The catalysed reaction is Release of an N-terminal pyroglutamyl group from a polypeptide, the second amino acid generally not being Pro.. In terms of biological role, removes 5-oxoproline from various penultimate amino acid residues except L-proline. This chain is Pyrrolidone-carboxylate peptidase (pcp), found in Pyrococcus furiosus (strain ATCC 43587 / DSM 3638 / JCM 8422 / Vc1).